The sequence spans 499 residues: Probable mitochondrial-processing peptidase subunit alpha-2, chloroplastic/mitochondrial (499 aa).

This sequence belongs to the peptidase M16 family. Heterodimer of alpha and beta subunits, forming the mitochondrial processing protease (MPP) in which subunit alpha is involved in substrate recognition and binding and subunit beta is the catalytic subunit. Component of the ubiquinol-cytochrome c oxidoreductase (cytochrome b-c1 complex, complex III, CIII), a multisubunit enzyme composed of 10 subunits. The complex is composed of 3 respiratory subunits cytochrome b (MT-CYB), cytochrome c1 (CYC1-1 or CYC1-2) and Rieske protein (UCR1-1 or UCR1-2), 2 core protein subunits MPPalpha1 (or MPPalpha2) and MPPB, and 5 low-molecular weight protein subunits QCR7-1 (or QCR7-2), UCRQ-1 (or UCRQ-2), QCR9, UCRY and probably QCR6-1 (or QCR6-2). The complex exists as an obligatory dimer and forms supercomplexes (SCs) in the inner mitochondrial membrane with NADH-ubiquinone oxidoreductase (complex I, CI), resulting in different assemblies (supercomplexes SCI(1)III(2) and SCI(2)III(4)). Interacts with TIM23-2.

The protein localises to the plastid. It localises to the chloroplast stroma. Its subcellular location is the mitochondrion matrix. The protein resides in the mitochondrion inner membrane. Its function is as follows. Substrate recognition and binding subunit of the essential mitochondrial processing protease (MPP), which cleaves the mitochondrial sequence off newly imported precursors proteins. Component of the ubiquinol-cytochrome c oxidoreductase, a multisubunit transmembrane complex that is part of the mitochondrial electron transport chain which drives oxidative phosphorylation. The respiratory chain contains 3 multisubunit complexes succinate dehydrogenase (complex II, CII), ubiquinol-cytochrome c oxidoreductase (cytochrome b-c1 complex, complex III, CIII) and cytochrome c oxidase (complex IV, CIV), that cooperate to transfer electrons derived from NADH and succinate to molecular oxygen, creating an electrochemical gradient over the inner membrane that drives transmembrane transport and the ATP synthase. The cytochrome b-c1 complex catalyzes electron transfer from ubiquinol to cytochrome c, linking this redox reaction to translocation of protons across the mitochondrial inner membrane, with protons being carried across the membrane as hydrogens on the quinol. In the process called Q cycle, 2 protons are consumed from the matrix, 4 protons are released into the intermembrane space and 2 electrons are passed to cytochrome c. This is Probable mitochondrial-processing peptidase subunit alpha-2, chloroplastic/mitochondrial (MPPalpha2) from Arabidopsis thaliana (Mouse-ear cress).